Reading from the N-terminus, the 288-residue chain is Elongation factor Ts (288 aa).

Positions Thr82–Val85 are involved in Mg(2+) ion dislocation from EF-Tu.

It belongs to the EF-Ts family.

The protein resides in the cytoplasm. Its function is as follows. Associates with the EF-Tu.GDP complex and induces the exchange of GDP to GTP. It remains bound to the aminoacyl-tRNA.EF-Tu.GTP complex up to the GTP hydrolysis stage on the ribosome. The sequence is that of Elongation factor Ts from Chlorobium luteolum (strain DSM 273 / BCRC 81028 / 2530) (Pelodictyon luteolum).